A 433-amino-acid chain; its full sequence is Oxidoreductase acuF (433 aa).

It functions in the pathway secondary metabolite biosynthesis. Oxidoreductase; part of the gene cluster that mediates the biosynthesis of aculins. The pathway begins with the synthesis of 6-methylsalicylic acid by the polyketide synthase (PKS) acuA via condensation of acetate and malonate units. The 6-methylsalicylic acid decarboxylase acuB then catalyzes the decarboxylation of 6-methylsalicylic acid to yield m-cresol (also known as 3-methylphenol). These first reactions occur in the cytosol. The intermediate m-cresol is then transported into the endoplasmic reticulum where the cytochrome P450 monooxygenase acuC converts it to m-hydroxybenzyl alcohol, which is further converted to gentisyl alcohol by the cytochrome P450 monooxygenase acuD. Gentisyl alcohol is further oxidized by the oxidoreductase acuE that probably catalyzes hydroxylation of the aromatic ring. The aromatic system might then be opened by oxidation through a Baeyer-Villiger type of oxidation, which could be catalyzed by acuF, with the carboxylic acid at C-1 subsequently reduced to an aldehyde by acuG. Subsequently, a hemiacetal is formed, before the dehydrogenase acuH would reduce the double bond between C-4 and C-6. Finally, keto-enol tautomerism results in formation of aculinic acid, which exists as two diastereomers (both R/S configurations at C-1) by non-enzymatic hemiacetal formation. The carboxypeptidase acuI could be involved in the linking of aculinic acid to an aculene A moiety produced by the aculene biosynthesis cluster and which leads to the production of aculin A. AcuI may also be involved in the attachment of proline to aculinic acid to form epi-aculins A and B. The polypeptide is Oxidoreductase acuF (Aspergillus aculeatus (strain ATCC 16872 / CBS 172.66 / WB 5094)).